The following is a 246-amino-acid chain: Nuclear transcription factor Y subunit C-2 (246 aa).

Disordered regions lie at residues 1-35 and 205-246; these read MDNQ…AVPH and QQGA…PSSE. Residues 9-21 show a composition bias toward low complexity; that stretch reads AGQPAAAGAGAPV.

The protein belongs to the NFYC/HAP5 subunit family. As to quaternary structure, heterotrimeric transcription factor composed of three components, NF-YA, NF-YB and NF-YC. NF-YB and NF-YC must interact and dimerize for NF-YA association and DNA binding. Interacts with NFYB8, NFYB10 and HD5/NFYB11.

It localises to the nucleus. It is found in the cytoplasm. Probable transcription factor involved in the regulation of flowering time under long day (LD) conditions. Functions as a repressor of flowering, independently of HD1 and GHD7. Controls flowering time by negatively regulating the expression of EHD1 and HD3A. Component of the NF-Y/HAP transcription factor complex. In Oryza sativa subsp. japonica (Rice), this protein is Nuclear transcription factor Y subunit C-2.